Here is a 266-residue protein sequence, read N- to C-terminus: tRNA pseudouridine synthase A (266 aa).

Aspartate 51 functions as the Nucleophile in the catalytic mechanism. Residue tyrosine 106 coordinates substrate.

The protein belongs to the tRNA pseudouridine synthase TruA family.

The catalysed reaction is uridine(38/39/40) in tRNA = pseudouridine(38/39/40) in tRNA. Functionally, formation of pseudouridine at positions 38, 39 and 40 in the anticodon stem and loop of transfer RNAs. This Pyrococcus furiosus (strain ATCC 43587 / DSM 3638 / JCM 8422 / Vc1) protein is tRNA pseudouridine synthase A.